A 213-amino-acid chain; its full sequence is Protein FAM177A1 (213 aa).

N-acetylmethionine is present on Met1. At Ser70 the chain carries Phosphoserine. Position 71 is a phosphothreonine (Thr71). The stretch at 136 to 173 forms a coiled coil; that stretch reads IDEYYRMKKEEEEEEEENRMSEEAEKQYQQNKLQTDSI. The segment at 147 to 175 is disordered; sequence EEEEEENRMSEEAEKQYQQNKLQTDSIVQ. Polar residues predominate over residues 162 to 175; that stretch reads QYQQNKLQTDSIVQ.

The protein belongs to the FAM177 family.

The chain is Protein FAM177A1 (FAM177A1) from Homo sapiens (Human).